Here is a 434-residue protein sequence, read N- to C-terminus: Putative magnesium transporter MRS2-D (434 aa).

Disordered regions lie at residues 126-171 and 279-311; these read AASP…DGEA and EASE…AGGG. The segment covering 279 to 291 has biased composition (basic and acidic residues); sequence EASELEDHSSRDE. 2 consecutive transmembrane segments (helical) span residues 367–387 and 405–425; these read GILL…TGVF and FPCA…AALL.

It belongs to the CorA metal ion transporter (MIT) (TC 1.A.35.5) family.

The protein resides in the membrane. Functionally, putative magnesium transporter. In Oryza sativa subsp. japonica (Rice), this protein is Putative magnesium transporter MRS2-D (MRS2-D).